Here is a 227-residue protein sequence, read N- to C-terminus: Cytosolic-abundant heat soluble protein 106094 (227 aa).

Residues 1 to 28 are disordered; the sequence is MEAMNMNIPRDAMFVPPPESEQNGYHEK. Residues 90–140 are a coiled coil; sequence VEEARRDYAAKTRENEMLGQQYEKELERKSEAYRKHQEVEADKIRKELEKQ. 2 CAHS motif regions span residues 122-140 and 159-177; these read YRKH…LEKQ and QKRM…MDRE. Positions 198-227 are disordered; that stretch reads LDSSAAGTESGGHVVSQSEKFTERNREMKR. Basic and acidic residues predominate over residues 217-227; sequence KFTERNREMKR.

It belongs to the Cytosolic-abundant heat soluble protein (CAHS) family.

It localises to the cytoplasm. CAHS proteins are cytosolic heat soluble proteins that seem to contribute to the anhydrobiosis in tardigrades, but their specific mechanisms are yet to be identified. It is possible that protection during anhydrobiosis might occur via the stabilization of vitrifying small molecules such as sugars, but not via the direct glass transition of CAHS proteins themselves. This Paramacrobiotus richtersi (Water bear) protein is Cytosolic-abundant heat soluble protein 106094.